The chain runs to 360 residues: Phosphoserine aminotransferase (360 aa).

Residue Arg-42 coordinates L-glutamate. Residues Trp-102, Thr-152, Asp-171, and Gln-194 each coordinate pyridoxal 5'-phosphate. Lys-195 is subject to N6-(pyridoxal phosphate)lysine. 237–238 (NT) lines the pyridoxal 5'-phosphate pocket.

This sequence belongs to the class-V pyridoxal-phosphate-dependent aminotransferase family. SerC subfamily. Homodimer. It depends on pyridoxal 5'-phosphate as a cofactor.

The protein localises to the cytoplasm. It carries out the reaction O-phospho-L-serine + 2-oxoglutarate = 3-phosphooxypyruvate + L-glutamate. It catalyses the reaction 4-(phosphooxy)-L-threonine + 2-oxoglutarate = (R)-3-hydroxy-2-oxo-4-phosphooxybutanoate + L-glutamate. The protein operates within amino-acid biosynthesis; L-serine biosynthesis; L-serine from 3-phospho-D-glycerate: step 2/3. Its pathway is cofactor biosynthesis; pyridoxine 5'-phosphate biosynthesis; pyridoxine 5'-phosphate from D-erythrose 4-phosphate: step 3/5. Catalyzes the reversible conversion of 3-phosphohydroxypyruvate to phosphoserine and of 3-hydroxy-2-oxo-4-phosphonooxybutanoate to phosphohydroxythreonine. The sequence is that of Phosphoserine aminotransferase from Coxiella burnetii (strain RSA 493 / Nine Mile phase I).